The sequence spans 143 residues: Large ribosomal subunit protein uL11 (143 aa).

The protein belongs to the universal ribosomal protein uL11 family. Part of the ribosomal stalk of the 50S ribosomal subunit. Interacts with L10 and the large rRNA to form the base of the stalk. L10 forms an elongated spine to which L12 dimers bind in a sequential fashion forming a multimeric L10(L12)X complex. In terms of processing, one or more lysine residues are methylated.

Its function is as follows. Forms part of the ribosomal stalk which helps the ribosome interact with GTP-bound translation factors. This chain is Large ribosomal subunit protein uL11, found in Alkalilimnicola ehrlichii (strain ATCC BAA-1101 / DSM 17681 / MLHE-1).